Reading from the N-terminus, the 483-residue chain is UDP-N-acetylmuramoyl-L-alanyl-D-glutamate--2,6-diaminopimelate ligase (483 aa).

Ser30 is a UDP-N-acetyl-alpha-D-muramoyl-L-alanyl-D-glutamate binding site. ATP is bound at residue 109 to 115 (GTNGKTT). UDP-N-acetyl-alpha-D-muramoyl-L-alanyl-D-glutamate contacts are provided by residues 151–152 (TT), Ser178, and Arg186. Position 218 is an N6-carboxylysine (Lys218). Meso-2,6-diaminopimelate is bound by residues Arg380, 403–406 (DNPR), Gly453, and Glu457. The Meso-diaminopimelate recognition motif motif lies at 403–406 (DNPR).

This sequence belongs to the MurCDEF family. MurE subfamily. The cofactor is Mg(2+). Carboxylation is probably crucial for Mg(2+) binding and, consequently, for the gamma-phosphate positioning of ATP.

The protein resides in the cytoplasm. The enzyme catalyses UDP-N-acetyl-alpha-D-muramoyl-L-alanyl-D-glutamate + meso-2,6-diaminopimelate + ATP = UDP-N-acetyl-alpha-D-muramoyl-L-alanyl-gamma-D-glutamyl-meso-2,6-diaminopimelate + ADP + phosphate + H(+). It functions in the pathway cell wall biogenesis; peptidoglycan biosynthesis. Its function is as follows. Catalyzes the addition of meso-diaminopimelic acid to the nucleotide precursor UDP-N-acetylmuramoyl-L-alanyl-D-glutamate (UMAG) in the biosynthesis of bacterial cell-wall peptidoglycan. The chain is UDP-N-acetylmuramoyl-L-alanyl-D-glutamate--2,6-diaminopimelate ligase from Chlamydia muridarum (strain MoPn / Nigg).